The sequence spans 393 residues: Serine/threonine protein kinase AFUB_078980 (393 aa).

In terms of domain architecture, Protein kinase spans 61 to 390 (YQVLSKLGFG…APELLTDPWL (330 aa)). Residues 67–75 (LGFGANSTV) and K90 contribute to the ATP site. D190 functions as the Proton acceptor in the catalytic mechanism.

It belongs to the protein kinase superfamily. CMGC Ser/Thr protein kinase family.

It catalyses the reaction L-seryl-[protein] + ATP = O-phospho-L-seryl-[protein] + ADP + H(+). The catalysed reaction is L-threonyl-[protein] + ATP = O-phospho-L-threonyl-[protein] + ADP + H(+). Its function is as follows. Serine/threonine protein kinase; part of the subtelomeric hrmA-associated cluster (HAC) containing genes that alter the hyphal surface (such as reduced total chitin or increased beta-glucan exposure) and perturb inter-hyphal interactions within the developing biofilms, resulting in a loss of vertically aligned polarized growing filaments. Consequently, this hypoxia-typic morphotype (called H-MORPH) with altered biofilm architecture leads to increased hypoxia fitness, increased host inflammation, rapid disease progression, and mortality in a murine model of invasive aspergillosis. The sequence is that of Serine/threonine protein kinase AFUB_078980 from Aspergillus fumigatus (strain CBS 144.89 / FGSC A1163 / CEA10) (Neosartorya fumigata).